The chain runs to 28 residues: uncharacterized protein (28 aa).

The protein localises to the cell inner membrane. This is an uncharacterized protein from Escherichia coli (strain K12).